Reading from the N-terminus, the 131-residue chain is Small ribosomal subunit protein uS19 (131 aa).

The protein belongs to the universal ribosomal protein uS19 family.

In terms of biological role, protein S19 forms a complex with S13 that binds strongly to the 16S ribosomal RNA. In Cenarchaeum symbiosum (strain A), this protein is Small ribosomal subunit protein uS19.